Reading from the N-terminus, the 251-residue chain is Developmental protein SEPALLATA 3 (251 aa).

The 55-residue stretch at 3 to 57 (RGRVELKRIENKINRQVTFAKRRNGLLKKAYELSVLCDAEVALIIFSNRGKLYEF) folds into the MADS-box domain. In terms of domain architecture, K-box spans 91-181 (ELSSQQEYLK…RLRLADGYQM (91 aa)). The stretch at 94–177 (SQQEYLKLKE…NKTLRLRLAD (84 aa)) forms a coiled coil.

As to quaternary structure, forms homodimers. Heterodimer with AP1 or AG capable of binding to CArG-box sequences. Binds AP3/PI to form a ternary complex. Interacts with AGL16. Interacts with TT16/AGL32.

It localises to the nucleus. Functionally, probable transcription factor active in inflorescence development and floral organogenesis. Functions with SEPALLATA1/AGL2 and SEPALLATA2/AGL4 to ensure proper development of petals, stamens and carpels and to prevent the indeterminate growth of the flower meristem. Interacts with APETALA1, AGAMOUS or APETALA3/PISTILLATA to form complexes, that could be involved in genes regulation during floral meristem development. Binds specifically to the CArG box DNA sequence 5'-CC (A/T)6 GG-3'. This is Developmental protein SEPALLATA 3 (SEP3) from Arabidopsis thaliana (Mouse-ear cress).